We begin with the raw amino-acid sequence, 542 residues long: ATP synthase subunit alpha (542 aa).

Position 176 to 183 (176 to 183 (GDRQTGKT)) interacts with ATP.

This sequence belongs to the ATPase alpha/beta chains family. F-type ATPases have 2 components, CF(1) - the catalytic core - and CF(0) - the membrane proton channel. CF(1) has five subunits: alpha(3), beta(3), gamma(1), delta(1), epsilon(1). CF(0) has three main subunits: a(1), b(2) and c(9-12). The alpha and beta chains form an alternating ring which encloses part of the gamma chain. CF(1) is attached to CF(0) by a central stalk formed by the gamma and epsilon chains, while a peripheral stalk is formed by the delta and b chains.

It is found in the cell membrane. The enzyme catalyses ATP + H2O + 4 H(+)(in) = ADP + phosphate + 5 H(+)(out). Its function is as follows. Produces ATP from ADP in the presence of a proton gradient across the membrane. The alpha chain is a regulatory subunit. In Tropheryma whipplei (strain TW08/27) (Whipple's bacillus), this protein is ATP synthase subunit alpha.